The following is a 438-amino-acid chain: Keratin, type I cytoskeletal 18 (438 aa).

The tract at residues 4–83 (AVSSRSTVVS…TLSGNAVISN (80 aa)) is head. A coil 1A region spans residues 84 to 119 (EKETMQDLNDRLSNYLETVRRLENANQQLEIQIREA). One can recognise an IF rod domain in the interval 84–395 (EKETMQDLND…HLLGGEDSDT (312 aa)). A linker 1 region spans residues 120–136 (MEKRGPSVRDYSNYEKI). Residues 137 to 228 (IKELRDQIYD…KNHEDEVIAL (92 aa)) form a coil 1B region. Residues 229–252 (RNQVNSCGVQVDLDAPKGTDLAEI) form a linker 12 region. A coil 2 region spans residues 253 to 393 (MATLRAEYEA…YRHLLGGEDS (141 aa)). A tail region spans residues 394-438 (DTLSLQDALSAMKVSNVQTVQKIVVTTQKLVDGKVVEDSTVTETK).

Belongs to the intermediate filament family. Heterotetramer of two type I and two type II keratins. Keratin-18 associates with keratin-8. Phosphorylated. In terms of processing, proteolytically cleaved by caspases during epithelial cell apoptosis. Expressed at low levels in skin.

Its function is as follows. When phosphorylated, plays a role in filament reorganization. The chain is Keratin, type I cytoskeletal 18 from Protopterus aethiopicus (Marbled lungfish).